A 473-amino-acid chain; its full sequence is PEP-dependent dihydroxyacetone kinase, phosphoryl donor subunit DhaM (473 aa).

Residues 1–137 (MVNLVIVSHS…LAAKQAQLGI (137 aa)) form the PTS EIIA type-4 domain. Histidine 9 functions as the Tele-phosphohistidine intermediate in the catalytic mechanism. Residues 155 to 242 (ARSVTVTIRN…SLAAEDFGEH (88 aa)) enclose the HPr domain. Residue histidine 169 is the Pros-phosphohistidine intermediate of the active site. The interval 266-472 (PLPLAQPARH…IDPAAQRVSC (207 aa)) is PTS EI-like, N-terminal part. Histidine 432 serves as the catalytic Tele-phosphohistidine intermediate.

It belongs to the PEP-utilizing enzyme family. As to quaternary structure, homodimer. The dihydroxyacetone kinase complex is composed of a homodimer of DhaM, a homodimer of DhaK and the subunit DhaL.

It catalyses the reaction dihydroxyacetone + phosphoenolpyruvate = dihydroxyacetone phosphate + pyruvate. In terms of biological role, component of the dihydroxyacetone kinase complex, which is responsible for the phosphoenolpyruvate (PEP)-dependent phosphorylation of dihydroxyacetone. DhaM serves as the phosphoryl donor. Is phosphorylated by phosphoenolpyruvate in an EI- and HPr-dependent reaction, and a phosphorelay system on histidine residues finally leads to phosphoryl transfer to DhaL and dihydroxyacetone. The chain is PEP-dependent dihydroxyacetone kinase, phosphoryl donor subunit DhaM from Pantoea ananatis (strain LMG 20103).